We begin with the raw amino-acid sequence, 343 residues long: Dihydroorotase (343 aa).

The Zn(2+) site is built by His-14 and His-16. Residues 16-18 (HLR) and Asn-42 each bind substrate. Zn(2+) is bound by residues Lys-100, His-137, and His-175. At Lys-100 the chain carries N6-carboxylysine. His-137 is a substrate binding site. Leu-220 is a binding site for substrate. Zn(2+) is bound at residue Asp-248. The active site involves Asp-248. Substrate-binding residues include His-252 and Ala-264.

The protein belongs to the metallo-dependent hydrolases superfamily. DHOase family. Class II DHOase subfamily. Homodimer. Requires Zn(2+) as cofactor.

The enzyme catalyses (S)-dihydroorotate + H2O = N-carbamoyl-L-aspartate + H(+). Its pathway is pyrimidine metabolism; UMP biosynthesis via de novo pathway; (S)-dihydroorotate from bicarbonate: step 3/3. Its function is as follows. Catalyzes the reversible cyclization of carbamoyl aspartate to dihydroorotate. This Parasynechococcus marenigrum (strain WH8102) protein is Dihydroorotase.